Reading from the N-terminus, the 136-residue chain is T-cell receptor alpha chain constant (136 aa).

The 85-residue stretch at 19 to 103 folds into the Ig-like C1-type domain; that stretch reads STLCLFTDFD…LTEKSFETDM (85 aa). Cysteine 22 and cysteine 72 are disulfide-bonded. Residues asparagine 66, asparagine 80, and asparagine 109 are each glycosylated (N-linked (GlcNAc...) asparagine). The segment at 90 to 111 is connecting peptide; sequence CDATLTEKSFETDMNLNFQNLS. A helical transmembrane segment spans residues 111 to 131; that stretch reads SVMGLRILLLKVAGFNLLMTL. Residues 132–136 lie on the Cytoplasmic side of the membrane; it reads RLWSS.

Alpha-beta TR is a heterodimer composed of an alpha and beta chain; disulfide-linked. The alpha-beta TR is associated with the transmembrane signaling CD3 coreceptor proteins to form the TR-CD3 (TcR or TCR). The assembly of alpha-beta TR heterodimers with CD3 occurs in the endoplasmic reticulum where a single alpha-beta TR heterodimer associates with one CD3D-CD3E heterodimer, one CD3G-CD3E heterodimer and one CD247 homodimer forming a stable octameric structure. CD3D-CD3E and CD3G-CD3E heterodimers preferentially associate with TR alpha and TR beta chains, respectively. The association of the CD247 homodimer is the last step of TcR assembly in the endoplasmic reticulum and is required for transport to the cell surface.

It is found in the cell membrane. Constant region of T cell receptor (TR) alpha chain. Alpha-beta T cell receptors are antigen specific receptors which are essential to the immune response and are present on the cell surface of T lymphocytes. Recognize peptide-major histocompatibility (MH) (pMH) complexes that are displayed by antigen presenting cells (APC), a prerequisite for efficient T cell adaptive immunity against pathogens. Binding of alpha-beta TR to pMH complex initiates TR-CD3 clustering on the cell surface and intracellular activation of LCK that phosphorylates the ITAM motifs of CD3G, CD3D, CD3E and CD247 enabling the recruitment of ZAP70. In turn, ZAP70 phosphorylates LAT, which recruits numerous signaling molecules to form the LAT signalosome. The LAT signalosome propagates signal branching to three major signaling pathways, the calcium, the mitogen-activated protein kinase (MAPK) kinase and the nuclear factor NF-kappa-B (NF-kB) pathways, leading to the mobilization of transcription factors that are critical for gene expression and essential for T cell growth and differentiation. The T cell repertoire is generated in the thymus, by V-(D)-J rearrangement. This repertoire is then shaped by intrathymic selection events to generate a peripheral T cell pool of self-MH restricted, non-autoaggressive T cells. Post-thymic interaction of alpha-beta TR with the pMH complexes shapes TR structural and functional avidity. This Mus musculus (Mouse) protein is T-cell receptor alpha chain constant.